The following is a 284-amino-acid chain: D-tagatose-1,6-bisphosphate aldolase subunit GatY (284 aa).

Asp82 serves as the catalytic Proton donor. 2 residues coordinate Zn(2+): His83 and His180. Gly181 provides a ligand contact to dihydroxyacetone phosphate. Residue His208 coordinates Zn(2+). Dihydroxyacetone phosphate contacts are provided by residues 209–211 (GAS) and 230–233 (NVAT).

This sequence belongs to the class II fructose-bisphosphate aldolase family. TagBP aldolase GatY subfamily. Forms a complex with GatZ. It depends on Zn(2+) as a cofactor.

It catalyses the reaction D-tagatofuranose 1,6-bisphosphate = D-glyceraldehyde 3-phosphate + dihydroxyacetone phosphate. The protein operates within carbohydrate metabolism; D-tagatose 6-phosphate degradation; D-glyceraldehyde 3-phosphate and glycerone phosphate from D-tagatose 6-phosphate: step 2/2. Its function is as follows. Catalytic subunit of the tagatose-1,6-bisphosphate aldolase GatYZ, which catalyzes the reversible aldol condensation of dihydroxyacetone phosphate (DHAP or glycerone-phosphate) with glyceraldehyde 3-phosphate (G3P) to produce tagatose 1,6-bisphosphate (TBP). Requires GatZ subunit for full activity and stability. Is involved in the catabolism of galactitol. The protein is D-tagatose-1,6-bisphosphate aldolase subunit GatY of Escherichia coli O7:K1 (strain IAI39 / ExPEC).